The following is a 275-amino-acid chain: Rhamnulose-1-phosphate aldolase (275 aa).

Glu117 is an active-site residue. Zn(2+) is bound by residues His141, His143, and His212.

The protein belongs to the aldolase class II family. RhaD subfamily. As to quaternary structure, homotetramer. It depends on Zn(2+) as a cofactor.

Its subcellular location is the cytoplasm. It carries out the reaction L-rhamnulose 1-phosphate = (S)-lactaldehyde + dihydroxyacetone phosphate. It functions in the pathway carbohydrate degradation; L-rhamnose degradation; glycerone phosphate from L-rhamnose: step 3/3. Its function is as follows. Catalyzes the reversible cleavage of L-rhamnulose-1-phosphate to dihydroxyacetone phosphate (DHAP) and L-lactaldehyde. In Salmonella choleraesuis (strain SC-B67), this protein is Rhamnulose-1-phosphate aldolase.